The chain runs to 489 residues: Serine/threonine-protein kinase BSK3 (489 aa).

The N-myristoyl glycine moiety is linked to residue Gly2. The Protein kinase domain maps to 58 to 324; that stretch reads EYIVSEHGEK…ETEVLSHVLM (267 aa). Residues 64-72 and Lys86 each bind ATP; that span reads HGEKAPNVV. Asp180 serves as the catalytic Proton acceptor. Position 212 is a phosphoserine (Ser212).

The protein belongs to the protein kinase superfamily. Ser/Thr protein kinase family. As to quaternary structure, interacts with BRI1. Post-translationally, phosphorylated by BRI1 upon brassinolide (BL) treatment. Phosphorylated by ASK7/BIN2 and ASK9/BIL2.

It is found in the cell membrane. The catalysed reaction is L-seryl-[protein] + ATP = O-phospho-L-seryl-[protein] + ADP + H(+). The enzyme catalyses L-threonyl-[protein] + ATP = O-phospho-L-threonyl-[protein] + ADP + H(+). Functionally, probable serine/threonine kinase that acts as a positive regulator of brassinosteroid (BR) signaling downstream of the receptor kinase BRI1. Mediates signal transduction from BRI1 by functioning as substrate of BRI1. Functions redundantly with BSK4, BSK6, BSK7 and BSK8. The polypeptide is Serine/threonine-protein kinase BSK3 (Arabidopsis thaliana (Mouse-ear cress)).